A 129-amino-acid polypeptide reads, in one-letter code: Phosphoribosyl-AMP cyclohydrolase (129 aa).

Asp-85 contributes to the Mg(2+) binding site. Cys-86 contributes to the Zn(2+) binding site. Residues Asp-87 and Asp-89 each coordinate Mg(2+). Cys-102 and Cys-109 together coordinate Zn(2+).

It belongs to the PRA-CH family. Homodimer. Mg(2+) serves as cofactor. Zn(2+) is required as a cofactor.

It localises to the cytoplasm. It catalyses the reaction 1-(5-phospho-beta-D-ribosyl)-5'-AMP + H2O = 1-(5-phospho-beta-D-ribosyl)-5-[(5-phospho-beta-D-ribosylamino)methylideneamino]imidazole-4-carboxamide. Its pathway is amino-acid biosynthesis; L-histidine biosynthesis; L-histidine from 5-phospho-alpha-D-ribose 1-diphosphate: step 3/9. In terms of biological role, catalyzes the hydrolysis of the adenine ring of phosphoribosyl-AMP. This Methanococcus maripaludis (strain DSM 14266 / JCM 13030 / NBRC 101832 / S2 / LL) protein is Phosphoribosyl-AMP cyclohydrolase (hisI).